The following is a 146-amino-acid chain: ATP synthase epsilon chain 2 (146 aa).

The protein belongs to the ATPase epsilon chain family. In terms of assembly, F-type ATPases have 2 components, CF(1) - the catalytic core - and CF(0) - the membrane proton channel. CF(1) has five subunits: alpha(3), beta(3), gamma(1), delta(1), epsilon(1). CF(0) has three main subunits: a, b and c.

The protein localises to the cell inner membrane. Its function is as follows. Produces ATP from ADP in the presence of a proton gradient across the membrane. This is ATP synthase epsilon chain 2 from Cereibacter sphaeroides (strain ATCC 17023 / DSM 158 / JCM 6121 / CCUG 31486 / LMG 2827 / NBRC 12203 / NCIMB 8253 / ATH 2.4.1.) (Rhodobacter sphaeroides).